A 183-amino-acid chain; its full sequence is Isopentenyl-diphosphate Delta-isomerase (183 aa).

Residues histidine 26 and histidine 33 each coordinate Mn(2+). In terms of domain architecture, Nudix hydrolase spans 31–165; that stretch reads SLHLAFSSWL…PWAFSPWMVS (135 aa). Residue cysteine 68 is part of the active site. Residue histidine 70 coordinates Mn(2+). Residue glutamate 88 coordinates Mg(2+). Positions 115 and 117 each coordinate Mn(2+). Residue glutamate 117 is part of the active site.

This sequence belongs to the IPP isomerase type 1 family. As to quaternary structure, homodimer. Requires Mg(2+) as cofactor. Mn(2+) serves as cofactor.

It is found in the cytoplasm. The catalysed reaction is isopentenyl diphosphate = dimethylallyl diphosphate. It participates in isoprenoid biosynthesis; dimethylallyl diphosphate biosynthesis; dimethylallyl diphosphate from isopentenyl diphosphate: step 1/1. Functionally, catalyzes the 1,3-allylic rearrangement of the homoallylic substrate isopentenyl (IPP) to its highly electrophilic allylic isomer, dimethylallyl diphosphate (DMAPP). In Enterobacter sp. (strain 638), this protein is Isopentenyl-diphosphate Delta-isomerase.